We begin with the raw amino-acid sequence, 108 residues long: MIVVTTDFVPGYEIVETLGIVTGSIVNSKHLGKDIAAAFKTLAGGEIKSYTELLVESRNIALKRMIDEAEKLGADAVIGLRFGSSSVMQSAAEILAYGTAVKLRKLSE.

Belongs to the UPF0145 family.

The polypeptide is UPF0145 protein Fnod_0426 (Fervidobacterium nodosum (strain ATCC 35602 / DSM 5306 / Rt17-B1)).